We begin with the raw amino-acid sequence, 409 residues long: 23S rRNA (uracil(747)-C(5))-methyltransferase (409 aa).

[4Fe-4S] cluster is bound by residues cysteine 61, cysteine 67, cysteine 70, and cysteine 137. Residues glutamine 251, tyrosine 277, glutamate 298, and aspartate 339 each coordinate S-adenosyl-L-methionine. Catalysis depends on cysteine 365, which acts as the Nucleophile.

Belongs to the class I-like SAM-binding methyltransferase superfamily. RNA M5U methyltransferase family.

The enzyme catalyses uridine(747) in 23S rRNA + S-adenosyl-L-methionine = 5-methyluridine(747) in 23S rRNA + S-adenosyl-L-homocysteine + H(+). Catalyzes the formation of 5-methyl-uridine at position equivalent to 747 (m5U747) in 23S rRNA. The sequence is that of 23S rRNA (uracil(747)-C(5))-methyltransferase from Pyrococcus furiosus (strain ATCC 43587 / DSM 3638 / JCM 8422 / Vc1).